The chain runs to 394 residues: Elongation factor Tu (394 aa).

Residues 10–204 (KPHINIGTIG…AVDDNIPTPE (195 aa)) enclose the tr-type G domain. Residues 19-26 (GHVDHGKT) form a G1 region. 19–26 (GHVDHGKT) contributes to the GTP binding site. Residue Thr-26 coordinates Mg(2+). Residues 60 to 64 (GITIN) form a G2 region. The G3 stretch occupies residues 81-84 (DCPG). Residues 81–85 (DCPGH) and 136–139 (NKVD) each bind GTP. The interval 136–139 (NKVD) is G4. Residues 174–176 (SAL) form a G5 region.

This sequence belongs to the TRAFAC class translation factor GTPase superfamily. Classic translation factor GTPase family. EF-Tu/EF-1A subfamily. In terms of assembly, monomer.

Its subcellular location is the cytoplasm. The catalysed reaction is GTP + H2O = GDP + phosphate + H(+). Its function is as follows. GTP hydrolase that promotes the GTP-dependent binding of aminoacyl-tRNA to the A-site of ribosomes during protein biosynthesis. In Chlamydia pneumoniae (Chlamydophila pneumoniae), this protein is Elongation factor Tu.